The sequence spans 483 residues: Aspartyl/glutamyl-tRNA(Asn/Gln) amidotransferase subunit B (483 aa).

The protein belongs to the GatB/GatE family. GatB subfamily. Heterotrimer of A, B and C subunits.

It catalyses the reaction L-glutamyl-tRNA(Gln) + L-glutamine + ATP + H2O = L-glutaminyl-tRNA(Gln) + L-glutamate + ADP + phosphate + H(+). It carries out the reaction L-aspartyl-tRNA(Asn) + L-glutamine + ATP + H2O = L-asparaginyl-tRNA(Asn) + L-glutamate + ADP + phosphate + 2 H(+). Its function is as follows. Allows the formation of correctly charged Asn-tRNA(Asn) or Gln-tRNA(Gln) through the transamidation of misacylated Asp-tRNA(Asn) or Glu-tRNA(Gln) in organisms which lack either or both of asparaginyl-tRNA or glutaminyl-tRNA synthetases. The reaction takes place in the presence of glutamine and ATP through an activated phospho-Asp-tRNA(Asn) or phospho-Glu-tRNA(Gln). The polypeptide is Aspartyl/glutamyl-tRNA(Asn/Gln) amidotransferase subunit B (Rickettsia canadensis (strain McKiel)).